The chain runs to 341 residues: Transmembrane protein 120A-A (341 aa).

Topologically, residues 1–131 (MLFNPTGLTE…KQSKFAYKDE (131 aa)) are cytoplasmic. Lys129 contributes to the CoA binding site. Residues 132 to 151 (YEKFKLYLTVLLLFFSFTCR) form a helical membrane-spanning segment. At 152–157 (FLVSYR) the chain is on the extracellular side. A helical transmembrane segment spans residues 158 to 176 (VVDALFNFLLVWYYCTLTI). Residues 177 to 189 (RESILINNGSKIK) are Cytoplasmic-facing. Ser186 and Lys187 together coordinate CoA. The chain crosses the membrane as a helical span at residues 190-208 (GWWVFQHYVSTFLSGVMLT). Residues 209 to 217 (WPDGELYQM) lie on the Extracellular side of the membrane. The chain crosses the membrane as a helical span at residues 218-239 (FRNQFLSYSMYINFVQFFQYYY). The CoA site is built by Gln236, Tyr239, Gln240, and His282. Residues 240-269 (QSGCLYRLRALGERHNMDLTVEGFQSWMWR) are Cytoplasmic-facing. The chain crosses the membrane as a helical span at residues 270 to 293 (GLTFLLPFLFLGHFFQLYNGITLF). Topologically, residues 294–303 (QMTQLPEWKE) are extracellular. Residues 304–329 (WQVLMCGSTFLVLFMGNFFTTLGVVY) traverse the membrane as a helical segment. The Cytoplasmic segment spans residues 330–341 (HKYMDQDKAKGL). Lys331 is a binding site for CoA.

This sequence belongs to the TMEM120 family. In terms of assembly, homodimer.

The protein localises to the cell membrane. The protein resides in the nucleus inner membrane. Its subcellular location is the endoplasmic reticulum. Its function is as follows. Multifunctional protein involved in mechanosensation, and plays an essential role in lipid metabolism. May function as a potential ion channel involved in sensing mechanical stimuli. TMEM120A is structurally similar to a lipid-modifying enzyme, ELOVL7, and contains a bound coenzyme A molecule, which suggests it might function as an enzyme in lipid metabolism. This chain is Transmembrane protein 120A-A (tmem120aa), found in Danio rerio (Zebrafish).